The chain runs to 156 residues: SCP2 sterol-binding domain-containing protein 1 (156 aa).

The 113-residue stretch at 44–156 (SFPVFQDIRL…ERVFKDWAKF (113 aa)) folds into the SCP2 domain.

This chain is SCP2 sterol-binding domain-containing protein 1 (SCP2D1), found in Homo sapiens (Human).